The following is a 529-amino-acid chain: RE1-silencing transcription factor B (529 aa).

The segment at 156-178 adopts a C2H2-type 1 zinc-finger fold; it reads FRCKPCQYKAESEEEFVHHIKIH. Residues 188-210 form a disordered region; the sequence is SNKKAQGNEADSSISEESDVSKG. 7 consecutive C2H2-type zinc fingers follow at residues 212 to 234, 244 to 266, 272 to 294, 300 to 322, 328 to 351, 357 to 379, and 385 to 408; these read IQCD…LKHH, YKCT…LRNH, YTCS…IRTH, YQCI…MRTH, FKCE…RQVH, LTCP…VELH, and FLCP…KSRH. Positions 484 to 529 are disordered; that stretch reads LSSTQKKIKTSDARPEKILDKSRKSSCVKRKSDLLENSNDTQTSTV. The segment covering 492 to 506 has biased composition (basic and acidic residues); it reads KTSDARPEKILDKSR. Positions 518 to 529 are enriched in polar residues; it reads LENSNDTQTSTV.

It localises to the nucleus. The protein resides in the cytoplasm. Its function is as follows. Transcriptional repressor which binds neuron-restrictive silencer element (NRSE) and represses neuronal gene transcription in non-neuronal cells. Plays a role in the early development of the nervous system and is required for proper patterning of the neuroectoderm during gastrulation. This involves the correct speciation of the neuroepithelial domain and adequate development of the non-neural ectoderm. The protein is RE1-silencing transcription factor B (rest-b) of Xenopus laevis (African clawed frog).